A 172-amino-acid polypeptide reads, in one-letter code: Small ribosomal subunit protein uS5 (172 aa).

An S5 DRBM domain is found at 17–80 (LKEKMIAINR…EEARRNMTKV (64 aa)).

Belongs to the universal ribosomal protein uS5 family. Part of the 30S ribosomal subunit. Contacts proteins S4 and S8.

Its function is as follows. With S4 and S12 plays an important role in translational accuracy. Located at the back of the 30S subunit body where it stabilizes the conformation of the head with respect to the body. This chain is Small ribosomal subunit protein uS5, found in Polaromonas naphthalenivorans (strain CJ2).